The chain runs to 793 residues: Phenylalanine--tRNA ligase beta subunit (793 aa).

Residues 39-148 (AGQFTHVIVA…DEAPIGMDLR (110 aa)) enclose the tRNA-binding domain. The B5 domain maps to 401–477 (PGTVSFLFDT…RLYGYDKLQA (77 aa)). Mg(2+) is bound by residues Asp455, Asp461, Glu464, and Glu465. The FDX-ACB domain maps to 698-792 (SKYPQIRRDL…LENEFSILLR (95 aa)).

This sequence belongs to the phenylalanyl-tRNA synthetase beta subunit family. Type 1 subfamily. Tetramer of two alpha and two beta subunits. Mg(2+) is required as a cofactor.

Its subcellular location is the cytoplasm. It catalyses the reaction tRNA(Phe) + L-phenylalanine + ATP = L-phenylalanyl-tRNA(Phe) + AMP + diphosphate + H(+). In Legionella pneumophila (strain Paris), this protein is Phenylalanine--tRNA ligase beta subunit.